The following is a 161-amino-acid chain: Lipoprotein signal peptidase (161 aa).

The next 4 membrane-spanning stretches (helical) occupy residues 8–28 (LKYFILAILIIAADLYTKYLA), 40–60 (ITSFFNLTLLYNHGAAFSLLS), 67–87 (QMIMFSTISLIAAIVLIYLII), and 91–111 (ITEKINLFSFALILGGALGNF). Active-site residues include Asp-122 and Asp-140. A helical membrane pass occupies residues 136 to 156 (FNIADSAITCGVVILIAASLF).

Belongs to the peptidase A8 family.

It localises to the cell inner membrane. The enzyme catalyses Release of signal peptides from bacterial membrane prolipoproteins. Hydrolyzes -Xaa-Yaa-Zaa-|-(S,diacylglyceryl)Cys-, in which Xaa is hydrophobic (preferably Leu), and Yaa (Ala or Ser) and Zaa (Gly or Ala) have small, neutral side chains.. Its pathway is protein modification; lipoprotein biosynthesis (signal peptide cleavage). This protein specifically catalyzes the removal of signal peptides from prolipoproteins. This chain is Lipoprotein signal peptidase, found in Francisella tularensis subsp. tularensis (strain FSC 198).